The chain runs to 436 residues: MRMTWNFHQYYTNRNDGLMGKLVLTDEEKNNLKALRKIIRLRTRDVFEEAKGIAKAVKKSALTFEIIQEKVSTTQIKHLSDSEQREVAKLIYEMDDDARDEFLGLTPRFWTQGSFQYDTLNRPFQPGQEMDIDDGTYMPMPIFESEPKIGHSLLILLVDASLKSLVAENHGWKFEAKQTCGRIKIEAEKTHIDVPMYAIPKDEFQKKQIALEANRSFVKGAIFESYVADSITDDSETYELDSENVNLALREGDRKWINSDPKIVEDWFNDSCIRIGKHLRKVCRFMKAWRDAQWDVGGPSSISLMAATVNILDSVAHDASDLGETMKIIAKHLPSEFARGVESPDSTDEKPLFPPSYKHGPREMDIMSKLERLPEILSSAESADSKSEALKKINMAFGNRVTNSELIVLAKALPAFAQEPSSASKPEKISSTMVSG.

112 to 117 serves as a coordination point for GTP; that stretch reads QGSFQY. The Mg(2+) site is built by D131 and D133. R182 is a binding site for ATP. D193 is a binding site for Mg(2+). S259 serves as a coordination point for ATP. GTP is bound by residues K287, S301, and D348. Disordered stretches follow at residues 339–358 and 417–436; these read RGVESPDSTDEKPLFPPSYK and AQEPSSASKPEKISSTMVSG. The span at 419–436 shows a compositional bias: polar residues; sequence EPSSASKPEKISSTMVSG. Residue G436 forms a Glycyl lysine isopeptide (Gly-Lys) (interchain with K-? in acceptor proteins) linkage.

This sequence belongs to the CD-NTase family. A01 subfamily. In terms of assembly, monomer. Interacts with Cap2 in the presence and absence of phage T2. A Cap2 dimer is bound on either side by a DncV monomer. Mg(2+) is required as a cofactor. In bacteria expressing capV-cdnD-cap2, this protein is conjugated to a number of other proteins (by Cap2 via this protein's C-terminal Gly residue), many of which are involved in metabolism. More conjugated protein is found in the absence of Cap3.

It carries out the reaction GTP + ATP = 3',3'-cGAMP + 2 diphosphate. With respect to regulation, primed for activation by Cap2 which conjugates it to cellular proteins; priming is target protein-specific (green fluorescent protein does not activate the enzyme), but which protein(s) activate is unclear. Enzymatic activity of DncV is inhibited by folate-like molecules, such as 5-methyltetrahydrofolate di-glutamate and 5-methyltetrahydrofolate, suggesting the existence of a signaling pathway that links folate-like metabolism cofactors to the regulation of cyclic dinucleotide second messenger synthesis. Lacks a regulatory loop and is constitutively activated. Functionally, cyclic nucleotide synthase (second messenger synthase) of a CBASS antivirus system. CBASS (cyclic oligonucleotide-based antiphage signaling system) provides immunity against bacteriophages. The CD-NTase protein (DncV, this protein) synthesizes cyclic nucleotides in response to infection; these serve as specific second messenger signals. The signals activate a diverse range of effectors, leading to bacterial cell death and thus abortive phage infection. A type II-A(GA) CBASS system. In terms of biological role, catalyzes the synthesis of 3',3'-cyclic GMP-AMP (cGAMP), a second messenger in cell signal transduction, from GTP and ATP in response to phage infection. Also able to produce c-di-AMP and c-di-GMP from ATP and GTP, respectively; however, cGAMP is the dominant molecule produced by DncV in vivo, contrary to the 2'3'-cGAMP produced by eukaryotes. Is required for efficient V.cholerae intestinal colonization, and down-regulates the colonization-influencing process of chemotaxis. Is not active with dATP, TTP, UTP or CTP. Its product controls the activity of cGAMP-activated phospholipase CapV, a patatin-like lipase that is a direct cGAMP receptor encoded in the dncV operon. Its function is as follows. Protects E.coli against phage infection. When the CBASS operon (capV-dncV-cap2-cap3) is introduced in E.coli MG1655 there is about 100-fold protection against phages P1 and T2. When the operon is introduced in E.coli MG1655 there is a more than 10(3) decrease in the efficiency of T2 plaque formation. Protects 100-fold against phage T5, offers no protection against T7. When the operon is introduced in E.coli MG1655 it protects against phages T2, T4, T5 and T6. Another paper shows the operon confers protection against phages P1, T2, T5 and T6 but not T4 or lambda. In Vibrio cholerae serotype O1 (strain ATCC 39315 / El Tor Inaba N16961), this protein is Cyclic GMP-AMP synthase.